The sequence spans 173 residues: CKLF-like MARVEL transmembrane domain-containing protein 8 (173 aa).

Residues 36–168 (FLRTLPGLLI…NTYFSFIAWR (133 aa)) enclose the MARVEL domain. The next 4 helical transmembrane spans lie at 40 to 60 (LPGL…TLIA), 70 to 90 (FGWV…FLII), 105 to 125 (TTVG…AAIV), and 147 to 167 (FFAF…FIAW).

The protein belongs to the chemokine-like factor family.

It is found in the membrane. The protein is CKLF-like MARVEL transmembrane domain-containing protein 8 (CMTM8) of Bos taurus (Bovine).